The chain runs to 211 residues: Urease accessory protein UreG (211 aa).

Position 11-18 (11-18) interacts with GTP; the sequence is GPVGSGKT.

This sequence belongs to the SIMIBI class G3E GTPase family. UreG subfamily. In terms of assembly, homodimer. UreD, UreF and UreG form a complex that acts as a GTP-hydrolysis-dependent molecular chaperone, activating the urease apoprotein by helping to assemble the nickel containing metallocenter of UreC. The UreE protein probably delivers the nickel.

The protein localises to the cytoplasm. Functionally, facilitates the functional incorporation of the urease nickel metallocenter. This process requires GTP hydrolysis, probably effectuated by UreG. In Photorhabdus laumondii subsp. laumondii (strain DSM 15139 / CIP 105565 / TT01) (Photorhabdus luminescens subsp. laumondii), this protein is Urease accessory protein UreG.